Reading from the N-terminus, the 429-residue chain is Saccharopine dehydrogenase-like oxidoreductase (429 aa).

Ala-2 bears the N-acetylalanine mark. Residues Ser-209, Ser-215, and Ser-217 each carry the phosphoserine modification.

It belongs to the saccharopine dehydrogenase family.

The protein is Saccharopine dehydrogenase-like oxidoreductase (Sccpdh) of Mus musculus (Mouse).